The primary structure comprises 57 residues: Small ribosomal subunit protein eS27 (57 aa).

Residues Cys-10, Cys-13, Cys-29, and Cys-32 each contribute to the Zn(2+) site. The segment at 10-32 (CPDCENEQTVFGKASTEVACAVC) adopts a C4-type zinc-finger fold.

Belongs to the eukaryotic ribosomal protein eS27 family. As to quaternary structure, part of the 30S ribosomal subunit. Zn(2+) is required as a cofactor.

In Halobacterium salinarum (strain ATCC 29341 / DSM 671 / R1), this protein is Small ribosomal subunit protein eS27.